The chain runs to 325 residues: HTH-type transcriptional regulator BbuR (325 aa).

Positions 15–72 (LDTDLLNVFCWVAKTQSFSRAAAELGTSQPVITRKIGRLEECLGVALFVRSNRGCVLT) constitute an HTH lysR-type domain. Residues 32-51 (FSRAAAELGTSQPVITRKIG) constitute a DNA-binding region (H-T-H motif).

It belongs to the LysR transcriptional regulatory family.

This chain is HTH-type transcriptional regulator BbuR (bbuR), found in Bordetella bronchiseptica (strain ATCC BAA-588 / NCTC 13252 / RB50) (Alcaligenes bronchisepticus).